The following is a 406-amino-acid chain: Phosphopentomutase (406 aa).

Positions 10, 305, 310, 346, 347, and 358 each coordinate Mn(2+).

This sequence belongs to the phosphopentomutase family. Mn(2+) is required as a cofactor.

Its subcellular location is the cytoplasm. The enzyme catalyses 2-deoxy-alpha-D-ribose 1-phosphate = 2-deoxy-D-ribose 5-phosphate. The catalysed reaction is alpha-D-ribose 1-phosphate = D-ribose 5-phosphate. It participates in carbohydrate degradation; 2-deoxy-D-ribose 1-phosphate degradation; D-glyceraldehyde 3-phosphate and acetaldehyde from 2-deoxy-alpha-D-ribose 1-phosphate: step 1/2. In terms of biological role, isomerase that catalyzes the conversion of deoxy-ribose 1-phosphate (dRib-1-P) and ribose 1-phosphate (Rib-1-P) to deoxy-ribose 5-phosphate (dRib-5-P) and ribose 5-phosphate (Rib-5-P), respectively. This chain is Phosphopentomutase, found in Vibrio vulnificus (strain CMCP6).